Reading from the N-terminus, the 312-residue chain is Aminoacyl tRNA synthase complex-interacting multifunctional protein 1 (312 aa).

Met1 is modified (N-acetylmethionine). Position 2 is an N-acetylalanine (Ala2). A required for fibroblast proliferation region spans residues 6 to 46 (AVLKRLEQKGAEADQIIEYLKQQVSLLKEKAILQATLREEK). An interaction with HSP90B1 region spans residues 54-194 (KLKKEIEELK…APRTVVSGLV (141 aa)). Positions 101–114 (AVTTVSSGTKEQIK) are required for endothelial cell death. A disordered region spans residues 107 to 147 (SGTKEQIKGGTGDEKKAKEKIEKKGEKKEKKQQSIAGSADS). Residues 111–138 (EQIKGGTGDEKKAKEKIEKKGEKKEKKQ) show a composition bias toward basic and acidic residues. Positions 114-192 (KGGTGDEKKA…EIAPRTVVSG (79 aa)) are required for endothelial cell migration. Residue Lys137 forms a Glycyl lysine isopeptide (Lys-Gly) (interchain with G-Cter in SUMO1) linkage. Residue Ser140 is modified to Phosphoserine. In terms of domain architecture, tRNA-binding spans 151 to 252 (DVSRLDLRIG…NGSVPGDRIT (102 aa)). The residue at position 269 (Lys269) is an N6-succinyllysine.

Homodimer. Part of the multisynthetase complex (MSC), a multisubunit complex that groups tRNA ligases for Arg (RARS1), Asp (DARS1), Gln (QARS1), Ile (IARS1), Leu (LARS1), Lys (KARS1), Met (MARS1) the bifunctional ligase for Glu and Pro (EPRS1) and the auxiliary subunits AIMP1/p43, AIMP2/p38 and EEF1E1/p18. Interacts (via N-terminus) with RARS1 (via N-terminus). Part of a complex composed of RARS1, QARS1 and AIMP1. Interacts (via C-terminus) with SMURF2. Interacts (via N-terminus) with HSP90B1/gp96 (via C-terminus). Interacts with PSMA7. Interacts with TARS3. Cleaved by caspase-7 in response to apoptosis to produce EMAP-II.

It localises to the nucleus. It is found in the cytoplasm. Its subcellular location is the cytosol. The protein resides in the secreted. The protein localises to the endoplasmic reticulum. It localises to the golgi apparatus. Non-catalytic component of the multisynthase complex. Stimulates the catalytic activity of cytoplasmic arginyl-tRNA synthase. Binds tRNA. Possesses inflammatory cytokine activity. Negatively regulates TGF-beta signaling through stabilization of SMURF2 by binding to SMURF2 and inhibiting its SMAD7-mediated degradation. Involved in glucose homeostasis through induction of glucagon secretion at low glucose levels. Promotes dermal fibroblast proliferation and wound repair. Regulates KDELR1-mediated retention of HSP90B1/gp96 in the endoplasmic reticulum. Plays a role in angiogenesis by inducing endothelial cell migration at low concentrations and endothelian cell apoptosis at high concentrations. Induces maturation of dendritic cells and monocyte cell adhesion. Modulates endothelial cell responses by degrading HIF-1A through interaction with PSMA7. In Homo sapiens (Human), this protein is Aminoacyl tRNA synthase complex-interacting multifunctional protein 1 (AIMP1).